The sequence spans 2211 residues: Norsolorinic acid synthase stcA (2211 aa).

Residues 11 to 251 (FLFGDQTYDF…REIPIYVPAH (241 aa)) form a starter unit:ACP transacylase (SAT) domain region. The segment at 358–378 (PAEPPTSINKTPERYSHRPGS) is disordered. Basic and acidic residues predominate over residues 368-378 (TPERYSHRPGS). One can recognise a Ketosynthase family 3 (KS3) domain in the interval 380–812 (RGKLAIVSMS…GGNTAVLVED (433 aa)). Catalysis depends on for beta-ketoacyl synthase activity residues Cys-552, His-687, and His-730. The malonyl-CoA:ACP transacylase (MAT) domain stretch occupies residues 912-1201 (IACSGQGSQY…MAGMIKTTLD (290 aa)). Residue Ser-1004 is the For acyl/malonyl transferase activity of the active site. The disordered stretch occupies residues 1289–1316 (TATSDYQLPSDEQVAAKRPSKQDESKEA). Residues 1327–1468 (HRVVEEKTEP…CTVRFTSEAQ (142 aa)) form an N-terminal hotdog fold region. A PKS/mFAS DH domain is found at 1327–1643 (HRVVEEKTEP…LRRVPRRGLR (317 aa)). Positions 1340-1643 (TLVVETDISR…LRRVPRRGLR (304 aa)) are product template (PT) domain. His-1359 acts as the Proton acceptor; for dehydratase activity in catalysis. The segment at 1495 to 1643 (FIRYTTKSGY…LRRVPRRGLR (149 aa)) is C-terminal hotdog fold. Asp-1555 acts as the Proton donor; for dehydratase activity in catalysis. A disordered region spans residues 1655 to 1706 (RLHGNQQAVKTQAPQRAALKQKPQSSPTQPHASKVAYSRSATSPTAGKPVVA). Composition is skewed to polar residues over residues 1658 to 1668 (GNQQAVKTQAP) and 1676 to 1685 (KPQSSPTQPH). 2 Carrier domains span residues 1712 to 1791 (REGD…SGSA) and 1839 to 1915 (DELF…GTTS). O-(pantetheine 4'-phosphoryl)serine occurs at positions 1749 and 1873. A compositionally biased stretch (low complexity) spans 1912 to 1926 (GTTSGSTTGSSGSGS). Residues 1912–1947 (GTTSGSTTGSSGSGSSEDETDSIPSTPEEYTTADTR) are disordered. A compositionally biased stretch (polar residues) spans 1934–1945 (IPSTPEEYTTAD). Residues 1969 to 2205 (ILFMLPDGGG…KEHVYLVREL (237 aa)) form a thioesterase/Claisen cyclase (TE/CLC) domain region. The For thioesterase activity role is filled by Ser-2039.

Pantetheine 4'-phosphate serves as cofactor.

It catalyses the reaction hexanoyl-[ACP] + 7 malonyl-CoA + 6 H(+) = noranthrone + holo-[ACP] + 7 CO2 + 7 CoA + 2 H2O. It participates in mycotoxin biosynthesis; sterigmatocystin biosynthesis. Its function is as follows. Non-reducing polyketide synthase; part of the gene cluster that mediates the biosynthesis of sterigmatocystin (ST), a polyketide-derived furanocoumarin which is part of the most toxic and carcinogenic compounds among the known mycotoxins. The first step in the biosynthesis of sterigmatocystin is the production of hexanoate by the fatty acid synthase (FAS) units stcJ and stcK. The polyketide backbone is assembled by the non-reducing polyketide synthase stcA by condensation of the starter hexanoyl-CoA and 7 malonyl-CoA extender units followed by cyclization and release of norsolorinic acid. Norsolorinic acid is the first stable intermediate in the biosynthesis of sterigmatocystin and is converted into averantin (AVN) by the ketoreductase stcE which reduces the hexanoate ketone to an alcohol. Averantin is then oxidized into 5'-hydroxyaverantin (HAVN) by the cytochrome P450 monooxygenase stcF. 5'-hydroxyaverantin is further converted to 5'-oxyaverantin (OAVN) by the 5'-hydroxyaverantin dehydrogenase stcG. The next step is the conversion of OAVN into averufin (AVF) which is catalyzed by a yet to be identified enzyme. The cytochrome P450 monooxygenase stcB and the flavin-binding monooxygenase stcW are both required for the conversion of averufin to 1-hydroxyversicolorone. The esterase stcI probably catalyzes the formation of versiconal hemiacetal acetate from 1-hydroxyversicolorone. The oxydoreductase stcN then probably catalyzes the biosynthetic step from versiconal to versicolorin B (VERB). The next step is performed by the versicolorin B desaturase stcL to produce versicolorin A (VERA). The ketoreductase stcU and the cytochrome P450 monooxygenase stcS are involved in the conversion of versicolorin A to demethylsterigmatocystin. The Baeyer-Villiger oxidas stcQ and the reductase stcR might be involved in the biosynthetic step from versicolorin A to demethylsterigmatocystin. The final step in the biosynthesis of sterigmatocystin is the methylation of demethylsterigmatocystin catalyzed by the methyltransferase stcP. The sequence is that of Norsolorinic acid synthase stcA from Emericella nidulans (strain FGSC A4 / ATCC 38163 / CBS 112.46 / NRRL 194 / M139) (Aspergillus nidulans).